The chain runs to 497 residues: Cytochrome P450 2D6 (497 aa).

D301 lines the substrate pocket. Residue C443 coordinates heme.

It belongs to the cytochrome P450 family. Requires heme as cofactor.

It is found in the endoplasmic reticulum membrane. It localises to the microsome membrane. The catalysed reaction is (5Z,8Z,11Z,14Z)-eicosatetraenoate + reduced [NADPH--hemoprotein reductase] + O2 = (8R,9S)-epoxy-(5Z,11Z,14Z)-eicosatrienoate + oxidized [NADPH--hemoprotein reductase] + H2O + H(+). It catalyses the reaction (5Z,8Z,11Z,14Z)-eicosatetraenoate + reduced [NADPH--hemoprotein reductase] + O2 = (11R,12S)-epoxy-(5Z,8Z,14Z)-eicosatrienoate + oxidized [NADPH--hemoprotein reductase] + H2O + H(+). It carries out the reaction (5Z,8Z,11Z,14Z)-eicosatetraenoate + reduced [NADPH--hemoprotein reductase] + O2 = (14S,15R)-epoxy-(5Z,8Z,11Z)-eicosatrienoate + oxidized [NADPH--hemoprotein reductase] + H2O + H(+). The enzyme catalyses N-(5Z,8Z,11Z,14Z-eicosatetraenoyl)-ethanolamine + reduced [NADPH--hemoprotein reductase] + O2 = N-(8,9-epoxy-5Z,11Z,14Z-eicosatrienoyl)-ethanolamine + oxidized [NADPH--hemoprotein reductase] + H2O + H(+). The catalysed reaction is N-(5Z,8Z,11Z,14Z-eicosatetraenoyl)-ethanolamine + reduced [NADPH--hemoprotein reductase] + O2 = N-(11,12-epoxy-5Z,8Z,14Z-eicosatrienoyl)-ethanolamine + oxidized [NADPH--hemoprotein reductase] + H2O + H(+). It catalyses the reaction N-(5Z,8Z,11Z,14Z-eicosatetraenoyl)-ethanolamine + reduced [NADPH--hemoprotein reductase] + O2 = N-(14,15-epoxy-5Z,8Z,11Z-eicosatrienoyl)-ethanolamine + oxidized [NADPH--hemoprotein reductase] + H2O + H(+). It carries out the reaction N-(5Z,8Z,11Z,14Z-eicosatetraenoyl)-ethanolamine + reduced [NADPH--hemoprotein reductase] + O2 = N-(20-hydroxy-5Z,8Z,11Z,14Z-eicosatetraenoyl)-ethanolamine + oxidized [NADPH--hemoprotein reductase] + H2O + H(+). The enzyme catalyses (5Z,8Z,11Z,14Z,17Z)-eicosapentaenoate + reduced [NADPH--hemoprotein reductase] + O2 = (17S,18R)-epoxy-(5Z,8Z,11Z,14Z)-eicosatetraenoate + oxidized [NADPH--hemoprotein reductase] + H2O + H(+). The catalysed reaction is (4Z,7Z,10Z,13Z,16Z,19Z)-docosahexaenoate + reduced [NADPH--hemoprotein reductase] + O2 = (19R,20S)-epoxy-(4Z,7Z,10Z,13Z,16Z)-docosapentaenoate + oxidized [NADPH--hemoprotein reductase] + H2O + H(+). It catalyses the reaction (4Z,7Z,10Z,13Z,16Z,19Z)-docosahexaenoate + reduced [NADPH--hemoprotein reductase] + O2 = (19S,20R)-epoxy-(4Z,7Z,10Z,13Z,16Z)-docosapentaenoate + oxidized [NADPH--hemoprotein reductase] + H2O + H(+). It carries out the reaction cholesterol + reduced [NADPH--hemoprotein reductase] + O2 = 25-hydroxycholesterol + oxidized [NADPH--hemoprotein reductase] + H2O + H(+). The enzyme catalyses all-trans-retinol + reduced [NADPH--hemoprotein reductase] + O2 = all-trans-retinal + oxidized [NADPH--hemoprotein reductase] + 2 H2O + H(+). It participates in cofactor metabolism; retinol metabolism. The protein operates within lipid metabolism; fatty acid metabolism. It functions in the pathway steroid metabolism; cholesterol metabolism. Its function is as follows. A cytochrome P450 monooxygenase involved in the metabolism of fatty acids, steroids and retinoids. Mechanistically, uses molecular oxygen inserting one oxygen atom into a substrate, and reducing the second into a water molecule, with two electrons provided by NADPH via cytochrome P450 reductase (NADPH--hemoprotein reductase). Catalyzes the epoxidation of double bonds of polyunsaturated fatty acids (PUFA). Metabolizes endocannabinoid arachidonoylethanolamide (anandamide) to 20-hydroxyeicosatetraenoic acid ethanolamide (20-HETE-EA) and 8,9-, 11,12-, and 14,15-epoxyeicosatrienoic acid ethanolamides (EpETrE-EAs), potentially modulating endocannabinoid system signaling. Catalyzes the hydroxylation of carbon-hydrogen bonds. Metabolizes cholesterol toward 25-hydroxycholesterol, a physiological regulator of cellular cholesterol homeostasis. Catalyzes the oxidative transformations of all-trans retinol to all-trans retinal, a precursor for the active form all-trans-retinoic acid. Also involved in the oxidative metabolism of drugs such as antiarrhythmics, adrenoceptor antagonists, and tricyclic antidepressants. This chain is Cytochrome P450 2D6, found in Homo sapiens (Human).